Reading from the N-terminus, the 492-residue chain is N-succinylglutamate 5-semialdehyde dehydrogenase (492 aa).

220–225 (GSASTG) is a binding site for NAD(+). Active-site residues include E243 and C277.

This sequence belongs to the aldehyde dehydrogenase family. AstD subfamily.

The enzyme catalyses N-succinyl-L-glutamate 5-semialdehyde + NAD(+) + H2O = N-succinyl-L-glutamate + NADH + 2 H(+). It participates in amino-acid degradation; L-arginine degradation via AST pathway; L-glutamate and succinate from L-arginine: step 4/5. In terms of biological role, catalyzes the NAD-dependent reduction of succinylglutamate semialdehyde into succinylglutamate. This Salmonella typhi protein is N-succinylglutamate 5-semialdehyde dehydrogenase.